A 178-amino-acid polypeptide reads, in one-letter code: Cytochrome b6-f complex iron-sulfur subunit (178 aa).

Residues 20 to 42 (LLTFGTATGVALGALYPVANYFM) form a helical membrane-spanning segment. One can recognise a Rieske domain in the interval 65 to 161 (KTGWLANHQA…VDVDDDAVLV (97 aa)). Residues C107, H109, C125, and H128 each coordinate [2Fe-2S] cluster. Residues C112 and C127 are joined by a disulfide bond.

Belongs to the Rieske iron-sulfur protein family. As to quaternary structure, the 4 large subunits of the cytochrome b6-f complex are cytochrome b6, subunit IV (17 kDa polypeptide, PetD), cytochrome f and the Rieske protein, while the 4 small subunits are PetG, PetL, PetM and PetN. The complex functions as a dimer. Requires [2Fe-2S] cluster as cofactor.

The protein localises to the cellular thylakoid membrane. It carries out the reaction 2 oxidized [plastocyanin] + a plastoquinol + 2 H(+)(in) = 2 reduced [plastocyanin] + a plastoquinone + 4 H(+)(out). In terms of biological role, component of the cytochrome b6-f complex, which mediates electron transfer between photosystem II (PSII) and photosystem I (PSI), cyclic electron flow around PSI, and state transitions. The chain is Cytochrome b6-f complex iron-sulfur subunit from Prochlorococcus marinus (strain MIT 9515).